The primary structure comprises 459 residues: MLKIFNTLTREKEIFKPIHENKVGMYVCGVTVYDLCHIGHGRTFVCFDVIARYLRSLGYDLTYVRNITDVDDKIIKRALENKETCDQLVDRMVQEMYKDFDALNVLRPDFEPRATHHIPEIIEIVEKLIKRGHAYVADNGDVMFDVESFKEYGKLSRQDLEQLQAGARIEINEIKKNPMDFVLWKMSKENEPSWSSPWGAGRPGWHIECSAMNCKQLGEHFDIHGGGSDLMFPHHENEIAQSCCAHGGQYVNYWIHSGMIMVDKEKMSKSLGNFFTIRDVLNHYNAEAVRYFLLTAHYRSQLNYSEENLNLAQGALERLYTALRGADQSAVVFGGENFVETFREAMDDDFNTPNALSVLFEMAREINKLKTEDVEKANGLAARLRELGAILGLLQQDPEKFLQAGSDDDEVAKIEVLIKQRNEARAAKDWPVADAARNELTAMGIVLEDGPNGTTWRKQ.

Cysteine 28 contacts Zn(2+). A 'HIGH' region motif is present at residues valine 30 to histidine 40. Positions 209, 234, and 238 each coordinate Zn(2+). The short motif at lysine 266–serine 270 is the 'KMSKS' region element. Lysine 269 contacts ATP.

This sequence belongs to the class-I aminoacyl-tRNA synthetase family. In terms of assembly, monomer. The cofactor is Zn(2+).

It is found in the cytoplasm. The enzyme catalyses tRNA(Cys) + L-cysteine + ATP = L-cysteinyl-tRNA(Cys) + AMP + diphosphate. This chain is Cysteine--tRNA ligase, found in Haemophilus influenzae (strain PittGG).